A 434-amino-acid polypeptide reads, in one-letter code: Transcription factor AP-2-epsilon (434 aa).

Residues 30-123 are disordered; sequence LNQGPYSSAP…GLSLDPRRDY (94 aa). The span at 52–62 shows a compositional bias: pro residues; the sequence is PYFPPPYPQPP. Residues 53 to 58 carry the PPxY motif motif; sequence YFPPPY. Polar residues predominate over residues 81 to 97; sequence SSINSIHHQHQQPSWHT. Residues 278–408 form an H-S-H (helix-span-helix), dimerization region; that stretch reads RRKAANVTLL…YLLESLKGMD (131 aa). The disordered stretch occupies residues 415-434; the sequence is TGNGHSAAESKSEKDIKHRK. Positions 422–434 are enriched in basic and acidic residues; the sequence is AESKSEKDIKHRK.

This sequence belongs to the AP-2 family. As to quaternary structure, binds DNA as a dimer. Can form homodimers or heterodimers with other AP-2 family members.

The protein resides in the nucleus. Its function is as follows. Sequence-specific DNA-binding protein that interacts with inducible viral and cellular enhancer elements to regulate transcription of selected genes. AP-2 factors bind to the consensus sequence 5'-GCCNNNGGC-3' and activate genes involved in a large spectrum of important biological functions. This is Transcription factor AP-2-epsilon from Xenopus laevis (African clawed frog).